We begin with the raw amino-acid sequence, 93 residues long: Small ribosomal subunit protein uS19 (93 aa).

Belongs to the universal ribosomal protein uS19 family.

Functionally, protein S19 forms a complex with S13 that binds strongly to the 16S ribosomal RNA. This is Small ribosomal subunit protein uS19 from Micrococcus luteus (strain ATCC 4698 / DSM 20030 / JCM 1464 / CCM 169 / CCUG 5858 / IAM 1056 / NBRC 3333 / NCIMB 9278 / NCTC 2665 / VKM Ac-2230) (Micrococcus lysodeikticus).